We begin with the raw amino-acid sequence, 463 residues long: Chromosomal replication initiator protein DnaA (463 aa).

Positions 1 to 83 (MSTNQIILTD…LQLFQHYNNT (83 aa)) are domain I, interacts with DnaA modulators. Positions 83-124 (TIKSVEIITKELPGTSKTVIELPTKTFADIGSSELNAENIFS) are domain II. The interval 125–343 (TLDVRFTFDN…GALNKVIAHS (219 aa)) is domain III, AAA+ region. ATP contacts are provided by Gly171, Gly173, Lys174, and Thr175. The interval 344 to 463 (NFTLKEITLE…INLLMKILQN (120 aa)) is domain IV, binds dsDNA.

This sequence belongs to the DnaA family. As to quaternary structure, oligomerizes as a right-handed, spiral filament on DNA at oriC.

It localises to the cytoplasm. Plays an essential role in the initiation and regulation of chromosomal replication. ATP-DnaA binds to the origin of replication (oriC) to initiate formation of the DNA replication initiation complex once per cell cycle. Binds the DnaA box (a 9 base pair repeat at the origin) and separates the double-stranded (ds)DNA. Forms a right-handed helical filament on oriC DNA; dsDNA binds to the exterior of the filament while single-stranded (ss)DNA is stabiized in the filament's interior. The ATP-DnaA-oriC complex binds and stabilizes one strand of the AT-rich DNA unwinding element (DUE), permitting loading of DNA polymerase. After initiation quickly degrades to an ADP-DnaA complex that is not apt for DNA replication. Binds acidic phospholipids. The polypeptide is Chromosomal replication initiator protein DnaA (Rickettsia canadensis (strain McKiel)).